The chain runs to 287 residues: Pantothenate synthetase (287 aa).

30–37 (MGYLHEGH) is a binding site for ATP. His37 acts as the Proton donor in catalysis. Gln61 contributes to the (R)-pantoate binding site. Beta-alanine is bound at residue Gln61. 150–153 (GMKD) lines the ATP pocket. Residue Gln156 coordinates (R)-pantoate. Residues Val179 and 187-190 (LSSR) contribute to the ATP site.

It belongs to the pantothenate synthetase family. As to quaternary structure, homodimer.

Its subcellular location is the cytoplasm. It carries out the reaction (R)-pantoate + beta-alanine + ATP = (R)-pantothenate + AMP + diphosphate + H(+). The protein operates within cofactor biosynthesis; (R)-pantothenate biosynthesis; (R)-pantothenate from (R)-pantoate and beta-alanine: step 1/1. Catalyzes the condensation of pantoate with beta-alanine in an ATP-dependent reaction via a pantoyl-adenylate intermediate. This chain is Pantothenate synthetase, found in Coprothermobacter proteolyticus (strain ATCC 35245 / DSM 5265 / OCM 4 / BT).